Reading from the N-terminus, the 1179-residue chain is Probable manganese-transporting ATPase PDR2 (1179 aa).

Topologically, residues 1–20 (MSSFRVGGKVVEKVDLCRKK) are cytoplasmic. A helical membrane pass occupies residues 21–42 (QLVWRLDVWPFAILYTVWLTTI). The Lumenal portion of the chain corresponds to 43 to 50 (VPSIDFSD). Residues 51-71 (ACIALGGLSAFHILVLLFTTW) traverse the membrane as a helical segment. The Cytoplasmic portion of the chain corresponds to 72-192 (SVDFKCFVQF…FDYPQPTFQK (121 aa)). A helical membrane pass occupies residues 193–215 (LMKENCMEPFFVFQVFCVGLWCL). The Lumenal segment spans residues 216 to 218 (DEF). A helical membrane pass occupies residues 219–238 (WYYSVFTLFMLFMFESTMAK). The Cytoplasmic segment spans residues 239–402 (SRLKTLTDLR…ERVTANSWES (164 aa)). A helical transmembrane segment spans residues 403-422 (GLFILFLVVFAVIAAGYVLV). Residues 423 to 435 (KGLEDPTRSKYKL) are Lumenal-facing. A helical transmembrane segment spans residues 436–453 (LLGCSLIITSVIPPELPM). Over 454 to 947 (ELSIAVNTSL…RQGRSTLVTT (494 aa)) the chain is Cytoplasmic. The 4-aspartylphosphate intermediate role is filled by D491. D812 and D816 together coordinate Mg(2+). Residues 833–880 (KLPLSPSDSSKDDKSKSKKSKLPLEPASKTITQNGEGSSKGKIPPQNR) form a disordered region. A helical transmembrane segment spans residues 948–967 (LQMFKILGLNCLATAYVLSV). The Lumenal portion of the chain corresponds to 968 to 979 (MYLDGVKLGDVQ). Residues 980–997 (ATISGVLTAAFFLFISHA) traverse the membrane as a helical segment. At 998-1013 (RPLQTLSAERPHPSVF) the chain is on the cytoplasmic side. A helical membrane pass occupies residues 1014–1034 (SVYLFLSLIGQFAVHLTFLVY). Residues 1035–1059 (SVKEAEKHMPEECIEPDASFHPNLV) lie on the Lumenal side of the membrane. A helical membrane pass occupies residues 1060-1079 (NTVSYMVSMMLQVATFAVNY). At 1080–1092 (MGHPFNQSIRENK) the chain is on the cytoplasmic side. A helical membrane pass occupies residues 1093–1110 (PFFYALIAGAGFFTVIAS). Residues 1111–1128 (DLFRDLNDSLKLVPLPQG) are Lumenal-facing. A helical membrane pass occupies residues 1129–1148 (LRDKLLIWASLMFIICYSWE). At 1149–1179 (RLLRWAFPGKISSWKHKQRAVTANLEKKKKV) the chain is on the cytoplasmic side.

This sequence belongs to the cation transport ATPase (P-type) (TC 3.A.3) family. Type V subfamily. As to expression, highly expressed in root meristem. Expressed in pavement cells of trichomes, stipules, stamens and pollen grains.

It localises to the endoplasmic reticulum membrane. It carries out the reaction ATP + H2O = ADP + phosphate + H(+). Functionally, mediates manganese transport into the endoplasmic reticulum. The ATPase activity is required for cellular manganese homeostasis. Plays an important role in pollen and root development through its impact on protein secretion and transport processes. Functions together with LPR1 and LPR2 in a common pathway that adjusts root meristem activity to phosphate availability. Under phosphate limitation, restricts SHR movement in root meristem and is required for maintaining SCR expression in the root meristem stem-cell niche as well as for proximal meristem activity. Can complement the yeast spf1 mutant. This Arabidopsis thaliana (Mouse-ear cress) protein is Probable manganese-transporting ATPase PDR2 (PDR2).